The chain runs to 630 residues: DNA mismatch repair protein MutL (630 aa).

The protein belongs to the DNA mismatch repair MutL/HexB family.

This protein is involved in the repair of mismatches in DNA. It is required for dam-dependent methyl-directed DNA mismatch repair. May act as a 'molecular matchmaker', a protein that promotes the formation of a stable complex between two or more DNA-binding proteins in an ATP-dependent manner without itself being part of a final effector complex. The protein is DNA mismatch repair protein MutL of Lactobacillus johnsonii (strain CNCM I-12250 / La1 / NCC 533).